The primary structure comprises 335 residues: Glycerol-3-phosphate dehydrogenase [NAD(P)+] (335 aa).

4 residues coordinate NADPH: serine 10, phenylalanine 11, arginine 31, and lysine 105. Sn-glycerol 3-phosphate is bound by residues lysine 105, glycine 136, and serine 138. Alanine 140 contributes to the NADPH binding site. 5 residues coordinate sn-glycerol 3-phosphate: lysine 191, aspartate 244, serine 254, arginine 255, and asparagine 256. Lysine 191 functions as the Proton acceptor in the catalytic mechanism. Arginine 255 contacts NADPH. The NADPH site is built by valine 279 and glutamate 281.

Belongs to the NAD-dependent glycerol-3-phosphate dehydrogenase family.

Its subcellular location is the cytoplasm. It catalyses the reaction sn-glycerol 3-phosphate + NAD(+) = dihydroxyacetone phosphate + NADH + H(+). The enzyme catalyses sn-glycerol 3-phosphate + NADP(+) = dihydroxyacetone phosphate + NADPH + H(+). Its pathway is membrane lipid metabolism; glycerophospholipid metabolism. Its function is as follows. Catalyzes the reduction of the glycolytic intermediate dihydroxyacetone phosphate (DHAP) to sn-glycerol 3-phosphate (G3P), the key precursor for phospholipid synthesis. The protein is Glycerol-3-phosphate dehydrogenase [NAD(P)+] of Leptospira borgpetersenii serovar Hardjo-bovis (strain JB197).